The chain runs to 168 residues: Alpha-N-acetylgalactosamine-specific lectin (168 aa).

The signal sequence occupies residues 1–18 (MAFFRALCFVLLVGFAAA). The C-type lectin domain maps to 38–163 (YNGNCYRYFG…CSRAFAYVCK (126 aa)). 2 disulfides stabilise this stretch: C59–C162 and C136–C154.

As to quaternary structure, monomer, homodimer and homooligomer.

Alpha-N-acetylgalactosamine-specific lectin. The oligomeric form has Ca(2+)-dependent hemagglutination activity towards sheep erythrocytes. Its hemagglutination activity is inhibited by various monosaccharides, oligosaccharides and glycopeptides, including inhibition by GalNAc, blood group A trisaccharide, Tn antigen, mucin and asialomucin. The chain is Alpha-N-acetylgalactosamine-specific lectin from Patiria pectinifera (Starfish).